Reading from the N-terminus, the 238-residue chain is 1-(5-phosphoribosyl)-5-[(5-phosphoribosylamino)methylideneamino] imidazole-4-carboxamide isomerase (238 aa).

D8 (proton acceptor) is an active-site residue. D129 (proton donor) is an active-site residue.

Belongs to the HisA/HisF family.

It localises to the cytoplasm. It catalyses the reaction 1-(5-phospho-beta-D-ribosyl)-5-[(5-phospho-beta-D-ribosylamino)methylideneamino]imidazole-4-carboxamide = 5-[(5-phospho-1-deoxy-D-ribulos-1-ylimino)methylamino]-1-(5-phospho-beta-D-ribosyl)imidazole-4-carboxamide. The protein operates within amino-acid biosynthesis; L-histidine biosynthesis; L-histidine from 5-phospho-alpha-D-ribose 1-diphosphate: step 4/9. The polypeptide is 1-(5-phosphoribosyl)-5-[(5-phosphoribosylamino)methylideneamino] imidazole-4-carboxamide isomerase (Anaeromyxobacter sp. (strain Fw109-5)).